The primary structure comprises 192 residues: Protein GrpE (192 aa).

The segment at 1–34 is disordered; that stretch reads MSSKEQKTPNEQVSEEMENTAEQQVEATQETGEC. Residues 20–31 show a composition bias toward polar residues; that stretch reads TAEQQVEATQET.

This sequence belongs to the GrpE family. In terms of assembly, homodimer.

The protein localises to the cytoplasm. Functionally, participates actively in the response to hyperosmotic and heat shock by preventing the aggregation of stress-denatured proteins, in association with DnaK and GrpE. It is the nucleotide exchange factor for DnaK and may function as a thermosensor. Unfolded proteins bind initially to DnaJ; upon interaction with the DnaJ-bound protein, DnaK hydrolyzes its bound ATP, resulting in the formation of a stable complex. GrpE releases ADP from DnaK; ATP binding to DnaK triggers the release of the substrate protein, thus completing the reaction cycle. Several rounds of ATP-dependent interactions between DnaJ, DnaK and GrpE are required for fully efficient folding. This Yersinia pseudotuberculosis serotype I (strain IP32953) protein is Protein GrpE.